The sequence spans 367 residues: 3-dehydroquinate synthase (367 aa).

NAD(+) contacts are provided by residues 69 to 74, 103 to 107, 127 to 128, K140, and K149; these read DGEAFK, GVIGD, and TT. Zn(2+)-binding residues include E182, H245, and H262.

This sequence belongs to the sugar phosphate cyclases superfamily. Dehydroquinate synthase family. NAD(+) serves as cofactor. The cofactor is Co(2+). Zn(2+) is required as a cofactor.

It is found in the cytoplasm. The catalysed reaction is 7-phospho-2-dehydro-3-deoxy-D-arabino-heptonate = 3-dehydroquinate + phosphate. The protein operates within metabolic intermediate biosynthesis; chorismate biosynthesis; chorismate from D-erythrose 4-phosphate and phosphoenolpyruvate: step 2/7. In terms of biological role, catalyzes the conversion of 3-deoxy-D-arabino-heptulosonate 7-phosphate (DAHP) to dehydroquinate (DHQ). The chain is 3-dehydroquinate synthase from Pseudomonas syringae pv. tomato (strain ATCC BAA-871 / DC3000).